A 136-amino-acid chain; its full sequence is Protein NrdI (136 aa).

It belongs to the NrdI family.

Its function is as follows. Probably involved in ribonucleotide reductase function. The sequence is that of Protein NrdI from Citrobacter koseri (strain ATCC BAA-895 / CDC 4225-83 / SGSC4696).